The primary structure comprises 163 residues: 3-isopropylmalate dehydratase small subunit (163 aa).

The protein belongs to the LeuD family. LeuD type 2 subfamily. As to quaternary structure, heterodimer of LeuC and LeuD.

The catalysed reaction is (2R,3S)-3-isopropylmalate = (2S)-2-isopropylmalate. It functions in the pathway amino-acid biosynthesis; L-leucine biosynthesis; L-leucine from 3-methyl-2-oxobutanoate: step 2/4. Functionally, catalyzes the isomerization between 2-isopropylmalate and 3-isopropylmalate, via the formation of 2-isopropylmaleate. The polypeptide is 3-isopropylmalate dehydratase small subunit (Brachyspira hyodysenteriae (strain ATCC 49526 / WA1)).